A 309-amino-acid polypeptide reads, in one-letter code: 1,4-dihydroxy-2-naphthoyl-CoA synthase (309 aa).

Residues R53, 98 to 102 (SGGDQ), Y110, 152 to 156 (WAAGG), T179, S185, Y282, and K297 each bind substrate.

The protein belongs to the enoyl-CoA hydratase/isomerase family. MenB subfamily.

The catalysed reaction is 2-succinylbenzoyl-CoA + H(+) = 1,4-dihydroxy-2-naphthoyl-CoA + H2O. It participates in quinol/quinone metabolism; 1,4-dihydroxy-2-naphthoate biosynthesis; 1,4-dihydroxy-2-naphthoate from chorismate: step 6/7. The protein operates within quinol/quinone metabolism; menaquinone biosynthesis. Converts o-succinylbenzoyl-CoA (OSB-CoA) to 1,4-dihydroxy-2-naphthoyl-CoA (DHNA-CoA). The polypeptide is 1,4-dihydroxy-2-naphthoyl-CoA synthase (Mycolicibacterium smegmatis (strain ATCC 700084 / mc(2)155) (Mycobacterium smegmatis)).